The primary structure comprises 162 residues: NADH-quinone oxidoreductase subunit I (162 aa).

4Fe-4S ferredoxin-type domains lie at 52–82 (LRRY…IEAG) and 93–122 (VRYD…EGPN). 8 residues coordinate [4Fe-4S] cluster: Cys-62, Cys-65, Cys-68, Cys-72, Cys-102, Cys-105, Cys-108, and Cys-112.

This sequence belongs to the complex I 23 kDa subunit family. In terms of assembly, NDH-1 is composed of 14 different subunits. Subunits NuoA, H, J, K, L, M, N constitute the membrane sector of the complex. [4Fe-4S] cluster is required as a cofactor.

The protein localises to the cell inner membrane. The enzyme catalyses a quinone + NADH + 5 H(+)(in) = a quinol + NAD(+) + 4 H(+)(out). NDH-1 shuttles electrons from NADH, via FMN and iron-sulfur (Fe-S) centers, to quinones in the respiratory chain. The immediate electron acceptor for the enzyme in this species is believed to be ubiquinone. Couples the redox reaction to proton translocation (for every two electrons transferred, four hydrogen ions are translocated across the cytoplasmic membrane), and thus conserves the redox energy in a proton gradient. The sequence is that of NADH-quinone oxidoreductase subunit I from Bradyrhizobium sp. (strain BTAi1 / ATCC BAA-1182).